We begin with the raw amino-acid sequence, 377 residues long: ATP-dependent (S)-NAD(P)H-hydrate dehydratase (377 aa).

The region spanning 10–366 is the YjeF C-terminal domain; that stretch reads LLHLSRQLIQ…EYLHESFTEL (357 aa). (6S)-NADPHX is bound by residues Gly-148 and 201-207; that span reads NVVEFQR. ATP contacts are provided by residues 245-249 and 264-273; these read KGEHD and GSNKRVGGQG. Residue Asp-274 coordinates (6S)-NADPHX.

Belongs to the NnrD/CARKD family. Mg(2+) is required as a cofactor.

The protein resides in the cytoplasm. The catalysed reaction is (6S)-NADHX + ATP = ADP + phosphate + NADH + H(+). It catalyses the reaction (6S)-NADPHX + ATP = ADP + phosphate + NADPH + H(+). Functionally, catalyzes the dehydration of the S-form of NAD(P)HX at the expense of ATP, which is converted to ADP. Together with NAD(P)HX epimerase, which catalyzes the epimerization of the S- and R-forms, the enzyme allows the repair of both epimers of NAD(P)HX, a damaged form of NAD(P)H that is a result of enzymatic or heat-dependent hydration. The polypeptide is ATP-dependent (S)-NAD(P)H-hydrate dehydratase (Candida albicans (strain SC5314 / ATCC MYA-2876) (Yeast)).